A 371-amino-acid polypeptide reads, in one-letter code: tRNA-specific 2-thiouridylase MnmA (371 aa).

Residues 16–23 and methionine 42 each bind ATP; that span reads GMSGGVDS. Residues 102 to 104 form an interaction with target base in tRNA region; it reads NPD. Cysteine 107 functions as the Nucleophile in the catalytic mechanism. Cysteine 107 and cysteine 204 are oxidised to a cystine. Glycine 132 contributes to the ATP binding site. Residues 154-156 form an interaction with tRNA region; that stretch reads KDQ. The active-site Cysteine persulfide intermediate is cysteine 204. The interval 316–317 is interaction with tRNA; sequence RY.

It belongs to the MnmA/TRMU family.

It localises to the cytoplasm. The catalysed reaction is S-sulfanyl-L-cysteinyl-[protein] + uridine(34) in tRNA + AH2 + ATP = 2-thiouridine(34) in tRNA + L-cysteinyl-[protein] + A + AMP + diphosphate + H(+). Catalyzes the 2-thiolation of uridine at the wobble position (U34) of tRNA, leading to the formation of s(2)U34. The sequence is that of tRNA-specific 2-thiouridylase MnmA from Shewanella halifaxensis (strain HAW-EB4).